The primary structure comprises 73 residues: MKKGIHPDYHMIDVKMTDGTVFQVRSTWGKEGEQMALEIDPLAHPAWTGGTAKLMDTGGRVSKFKNKYAGLGF.

This sequence belongs to the bacterial ribosomal protein bL31 family. Type A subfamily. In terms of assembly, part of the 50S ribosomal subunit.

In terms of biological role, binds the 23S rRNA. The sequence is that of Large ribosomal subunit protein bL31 from Cereibacter sphaeroides (strain ATCC 17025 / ATH 2.4.3) (Rhodobacter sphaeroides).